The chain runs to 430 residues: Probable sugar isomerase R00627 (430 aa).

Positions 257, 289, and 291 each coordinate Mn(2+).

Belongs to the rhamnose isomerase family. Mn(2+) serves as cofactor.

The sequence is that of Probable sugar isomerase R00627 from Rhizobium meliloti (strain 1021) (Ensifer meliloti).